A 363-amino-acid chain; its full sequence is Dihydroorotate dehydrogenase (quinone) (363 aa).

Residues Ala67–Lys71 and Thr91 contribute to the FMN site. Position 71 (Lys71) interacts with substrate. Asn116–Phe120 contacts substrate. The FMN site is built by Asn145 and Asn178. Residue Asn178 coordinates substrate. Ser181 functions as the Nucleophile in the catalytic mechanism. Asn183 provides a ligand contact to substrate. FMN-binding residues include Lys224 and Thr254. Asn255–Thr256 provides a ligand contact to substrate. FMN contacts are provided by residues Gly275, Gly304, and Tyr325–Ser326.

This sequence belongs to the dihydroorotate dehydrogenase family. Type 2 subfamily. In terms of assembly, monomer. The cofactor is FMN.

Its subcellular location is the cell membrane. The catalysed reaction is (S)-dihydroorotate + a quinone = orotate + a quinol. Its pathway is pyrimidine metabolism; UMP biosynthesis via de novo pathway; orotate from (S)-dihydroorotate (quinone route): step 1/1. Catalyzes the conversion of dihydroorotate to orotate with quinone as electron acceptor. The sequence is that of Dihydroorotate dehydrogenase (quinone) from Acidithiobacillus ferrooxidans (strain ATCC 23270 / DSM 14882 / CIP 104768 / NCIMB 8455) (Ferrobacillus ferrooxidans (strain ATCC 23270)).